The chain runs to 688 residues: Glycine--tRNA ligase beta subunit (688 aa).

This sequence belongs to the class-II aminoacyl-tRNA synthetase family. Tetramer of two alpha and two beta subunits.

It localises to the cytoplasm. It carries out the reaction tRNA(Gly) + glycine + ATP = glycyl-tRNA(Gly) + AMP + diphosphate. This is Glycine--tRNA ligase beta subunit from Shewanella sp. (strain MR-7).